The chain runs to 243 residues: Epoxyqueuosine reductase QueH (243 aa).

The span at 1-16 (MHRTKLEQKQPHFDAQ) shows a compositional bias: basic and acidic residues. The tract at residues 1–30 (MHRTKLEQKQPHFDAQKRRKKECKNSNTPF) is disordered. [4Fe-4S] cluster-binding residues include C49, C50, C128, and C131. C211 and C213 are disulfide-bonded.

This sequence belongs to the QueH family.

It catalyses the reaction epoxyqueuosine(34) in tRNA + AH2 = queuosine(34) in tRNA + A + H2O. The protein operates within tRNA modification; tRNA-queuosine biosynthesis. Catalyzes the conversion of epoxyqueuosine (oQ) to queuosine (Q), which is a hypermodified base found in the wobble positions of tRNA(Asp), tRNA(Asn), tRNA(His) and tRNA(Tyr). In Histophilus somni (strain 129Pt) (Haemophilus somnus), this protein is Epoxyqueuosine reductase QueH.